The sequence spans 317 residues: Protein phosphatase 1 regulatory subunit 3C-B (317 aa).

In terms of domain architecture, CBM21 spans 150 to 258 (RNRLKKNLVC…NNDGKNYKLV (109 aa)).

In terms of assembly, interacts with PPP1CC catalytic subunit of PP1 and associates with glycogen. Forms complexes with glycogen phosphorylase, glycogen synthase and phosphorylase kinase which is necessary for its regulation of PP1 activity.

Its function is as follows. Acts as a glycogen-targeting subunit for PP1 and regulates its activity. Activates glycogen synthase, reduces glycogen phosphorylase activity and limits glycogen breakdown. In Danio rerio (Zebrafish), this protein is Protein phosphatase 1 regulatory subunit 3C-B (ppp1r3cb).